Consider the following 465-residue polypeptide: GTPase Der (465 aa).

2 EngA-type G domains span residues Pro3–Gly167 and Ile179–Asn352. GTP contacts are provided by residues Gly9–Ser16, Asp57–Ile61, Asn119–Asp122, Gly185–Ser192, Asp232–Leu236, and Asn297–Asp300. The 85-residue stretch at Lys353–Thr437 folds into the KH-like domain.

This sequence belongs to the TRAFAC class TrmE-Era-EngA-EngB-Septin-like GTPase superfamily. EngA (Der) GTPase family. As to quaternary structure, associates with the 50S ribosomal subunit.

Its function is as follows. GTPase that plays an essential role in the late steps of ribosome biogenesis. In Stenotrophomonas maltophilia (strain R551-3), this protein is GTPase Der.